The following is an 88-amino-acid chain: Large ribosomal subunit protein eL37 (88 aa).

Positions 19, 22, 34, and 37 each coordinate Zn(2+). The C4-type zinc-finger motif lies at 19-37 (CNRCGKRSFHVQKKTCASC).

Belongs to the eukaryotic ribosomal protein eL37 family. The cofactor is Zn(2+).

Its function is as follows. Binds to the 23S rRNA. This Debaryomyces hansenii (strain ATCC 36239 / CBS 767 / BCRC 21394 / JCM 1990 / NBRC 0083 / IGC 2968) (Yeast) protein is Large ribosomal subunit protein eL37 (RPL37).